The chain runs to 29 residues: M-poneritoxin-Ng3d (29 aa).

In terms of tissue distribution, expressed by the venom gland.

The protein resides in the secreted. Its function is as follows. Has activity against some Gram-positive bacteria and S.cerevisiae. Has a non-hemolytic activity. In Neoponera goeldii (Ponerine ant), this protein is M-poneritoxin-Ng3d.